A 79-amino-acid chain; its full sequence is Small ribosomal subunit protein bS18 (79 aa).

The protein belongs to the bacterial ribosomal protein bS18 family. In terms of assembly, part of the 30S ribosomal subunit. Forms a tight heterodimer with protein bS6.

Binds as a heterodimer with protein bS6 to the central domain of the 16S rRNA, where it helps stabilize the platform of the 30S subunit. The sequence is that of Small ribosomal subunit protein bS18 from Nitrobacter winogradskyi (strain ATCC 25391 / DSM 10237 / CIP 104748 / NCIMB 11846 / Nb-255).